We begin with the raw amino-acid sequence, 434 residues long: Perilipin-3 (434 aa).

Residues 1-22 (MSADGAEADGSTQVTVEEPVQQ) are disordered. At serine 2 the chain carries N-acetylserine. Position 31 is a phosphoserine (serine 31). Lysine 65 carries the N6-acetyllysine modification. Position 91 is a phosphoserine (serine 91). Lysine 122 is covalently cross-linked (Glycyl lysine isopeptide (Lys-Gly) (interchain with G-Cter in SUMO1)). Phosphoserine is present on residues serine 130 and serine 148. Threonine 170 carries the phosphothreonine modification. A phosphoserine mark is found at serine 175 and serine 179. Threonine 216 is modified (phosphothreonine). 2 positions are modified to phosphoserine: serine 217 and serine 241. Tyrosine 251 is modified (phosphotyrosine). Coiled coils occupy residues 252-277 (EHSL…QVLS) and 353-377 (TNVK…SSIH).

The protein belongs to the perilipin family. As to quaternary structure, homooligomer. Interacts with M6PR (via the cytoplasmic domain). Interacts with IGF2R (via the cytoplasmic domain). In terms of assembly, may exist as a homodimer. In terms of processing, phosphorylation at Tyr-251 by isoform 1 of CHKA (CHKalpha2) promotes dissociation from lipid droplets: dissociation is followed by recruitment of autophagosome machinery to lipid droplets and subsequent lipid droplet lipolysis.

It localises to the lipid droplet. It is found in the endosome membrane. The protein resides in the cytoplasm. Its function is as follows. Structural component of lipid droplets, which is required for the formation and maintenance of lipid storage droplets. Required for the transport of mannose 6-phosphate receptors (MPR) from endosomes to the trans-Golgi network. The protein is Perilipin-3 (PLIN3) of Homo sapiens (Human).